A 242-amino-acid chain; its full sequence is MSMMCYTLIIAFLIGIWAAPKSEDNVPLGSPATSDLSDTSCAQTHEGLKTSRNTDQRHPAPKKAEDQELGSAANIIVDPKLFQKRRFQSPRVLFSTQPPPLSRDEQSVEFLDNEDTLNRNIRAKRENHPVHNQGEHSVCDSVSDWVIKTTATDIHGNMVTVMGDINFTNEVYKQYFFETKCRNPNPVPSGCRGIDSKVWNSYCTTTQTFVKALTMEGSRASWRFIRIDTACVCVISRKTENF.

A signal peptide spans 1–18 (MSMMCYTLIIAFLIGIWA). Positions 19-125 (APKSEDNVPL…TLNRNIRAKR (107 aa)) are excised as a propeptide. The span at 47–66 (GLKTSRNTDQRHPAPKKAED) shows a compositional bias: basic and acidic residues. The tract at residues 47-70 (GLKTSRNTDQRHPAPKKAEDQELG) is disordered. Intrachain disulfides connect Cys-139/Cys-203, Cys-181/Cys-231, and Cys-191/Cys-233. Asn-166 carries an N-linked (GlcNAc...) asparagine glycan.

This sequence belongs to the NGF-beta family. Homodimer; non-covalently linked. In terms of tissue distribution, expressed by the venom gland.

It is found in the secreted. Nerve growth factor is important for the development and maintenance of the sympathetic and sensory nervous systems. It stimulates division and differentiation of sympathetic and embryonic sensory neurons as well as basal forebrain cholinergic neurons in the brain. Its relevance in the snake venom is not clear. However, it has been shown to inhibit metalloproteinase-dependent proteolysis of platelet glycoprotein Ib alpha, suggesting a metalloproteinase inhibition to prevent metalloprotease autodigestion and/or protection against prey proteases. Binds a lipid between the two protein chains in the homodimer. The lipid-bound form promotes histamine relase from mouse mast cells, contrary to the lipid-free form. In Drysdalia coronoides (White-lipped snake), this protein is Venom nerve growth factor.